We begin with the raw amino-acid sequence, 224 residues long: Golgi to ER traffic protein 1 (224 aa).

The Lumenal portion of the chain corresponds to 1–33; the sequence is MDEAIIVDAEFVAPVGTTAGEFVPIDRAPAAGL. The helical transmembrane segment at 34–53 threads the bilayer; it reads LLLVAFVVLYAKVISKLGKP. At 54–137 the chain is on the cytoplasmic side; sequence AIQEFLWEII…RFFTIISSAI (84 aa). A coiled-coil region spans residues 102–124; it reads AKLDREYGKLKVEIEDINNLLTA. Residues 138 to 158 traverse the membrane as a helical segment; sequence FLSTTGMKMFLRIKHRKAAIF. At 159-182 the chain is on the lumenal side; it reads WLPKNAFPYPIEYILSFSSAPLGS. A helical transmembrane segment spans residues 183–199; the sequence is VSVSAWLMICDAAMDLI. Topologically, residues 200–224 are cytoplasmic; sequence VTIFVALVVGVIGMLRSNKVKPKTA.

This sequence belongs to the WRB/GET1 family. In terms of assembly, component of the Golgi to ER traffic (GET) complex, which is composed of GET1, GET2 and GET3. Within the complex, GET1 and GET2 form a heterotetramer which is stabilized by phosphatidylinositol binding and which binds to the GET3 homodimer.

The protein localises to the endoplasmic reticulum membrane. Its subcellular location is the golgi apparatus membrane. Functionally, required for the post-translational delivery of tail-anchored (TA) proteins to the endoplasmic reticulum. Together with GET2, acts as a membrane receptor for soluble GET3, which recognizes and selectively binds the transmembrane domain of TA proteins in the cytosol. The GET complex cooperates with the HDEL receptor ERD2 to mediate the ATP-dependent retrieval of resident ER proteins that contain a C-terminal H-D-E-L retention signal from the Golgi to the ER. In Yarrowia lipolytica (strain CLIB 122 / E 150) (Yeast), this protein is Golgi to ER traffic protein 1.